A 363-amino-acid chain; its full sequence is NAD(P)H-quinone oxidoreductase subunit 1, chloroplastic (363 aa).

The next 6 helical transmembrane spans lie at 27-47, 98-118, 127-147, 248-268, 300-320, and 336-356; these read IWLF…VLVI, FSIG…VIPF, LSIG…GLLM, YSGI…LVSS, VFGT…FLFI, and LLNL…LLTT.

This sequence belongs to the complex I subunit 1 family. As to quaternary structure, NDH is composed of at least 16 different subunits, 5 of which are encoded in the nucleus.

It localises to the plastid. The protein localises to the chloroplast thylakoid membrane. The catalysed reaction is a plastoquinone + NADH + (n+1) H(+)(in) = a plastoquinol + NAD(+) + n H(+)(out). It carries out the reaction a plastoquinone + NADPH + (n+1) H(+)(in) = a plastoquinol + NADP(+) + n H(+)(out). Functionally, NDH shuttles electrons from NAD(P)H:plastoquinone, via FMN and iron-sulfur (Fe-S) centers, to quinones in the photosynthetic chain and possibly in a chloroplast respiratory chain. The immediate electron acceptor for the enzyme in this species is believed to be plastoquinone. Couples the redox reaction to proton translocation, and thus conserves the redox energy in a proton gradient. The chain is NAD(P)H-quinone oxidoreductase subunit 1, chloroplastic from Amborella trichopoda.